The following is a 300-amino-acid chain: Type II methyltransferase M.XycI (300 aa).

Positions 109–129 (RGYRAPDKKNPARAMDVRPDT) are disordered. The span at 112–127 (RAPDKKNPARAMDVRP) shows a compositional bias: basic and acidic residues.

Belongs to the N(4)/N(6)-methyltransferase family. N(4) subfamily.

The enzyme catalyses a 2'-deoxycytidine in DNA + S-adenosyl-L-methionine = an N(4)-methyl-2'-deoxycytidine in DNA + S-adenosyl-L-homocysteine + H(+). Functionally, a beta subtype methylase, recognizes the double-stranded sequence 5'-CCCGGG-3', methylates C-2 on both strands, and protects the DNA from cleavage by the XcyI endonuclease. The sequence is that of Type II methyltransferase M.XycI (xcyIM) from Xanthomonas campestris pv. cyanopsidis.